Reading from the N-terminus, the 597-residue chain is Protein unc-93 homolog B1 (597 aa).

A disordered region spans residues 1–29 (MEAEPPLYPMAGAAGPQGDEDLLGVPDGP). 5 helical membrane-spanning segments follow: residues 64–84 (VLAA…LLQM), 110–130 (KMLM…PVLI), 132–152 (FFGT…FVST), 160–180 (TLVP…ASMG), and 223–243 (IFYS…IYFL). Residues N251 and N272 are each glycosylated (N-linked (GlcNAc...) asparagine). A run of 5 helical transmembrane segments spans residues 285-305 (LIVV…LVLG), 343-363 (LVPF…GIAL), 378-398 (LLVA…LGLW), 403-423 (VPLV…FFWA), and 428-448 (VLQH…GSAL). A glycan (N-linked (GlcNAc...) asparagine) is linked at N449. 2 helical membrane-spanning segments follow: residues 469–489 (FIFT…YLGS) and 491–511 (LHMK…AVSY). Residues 522-597 (VAPRQPRIPR…AQGGDGPEEQ (76 aa)) are disordered. A phosphoserine mark is found at S547 and S550.

Belongs to the unc-93 family. Interacts with TLR3, TLR5, TLR7, and TLR9 (probably via transmembrane domain). Post-translationally, N-glycosylated. Expressed in plasmocytoid dendritic cells (at protein level). Highly expressed in antigen-presenting cells. Expressed in heart, and at lower level in kidney. Expressed at low level in other tissues.

It is found in the endoplasmic reticulum membrane. The protein resides in the endosome. The protein localises to the lysosome. Its subcellular location is the cytoplasmic vesicle. It localises to the phagosome. Functionally, plays an important role in innate and adaptive immunity by regulating nucleotide-sensing Toll-like receptor (TLR) signaling. Required for the transport of a subset of TLRs (including TLR3, TLR7 and TLR9) from the endoplasmic reticulum to endolysosomes where they can engage pathogen nucleotides and activate signaling cascades. May play a role in autoreactive B-cells removal. This is Protein unc-93 homolog B1 from Homo sapiens (Human).